Here is a 185-residue protein sequence, read N- to C-terminus: Translation initiation factor IF-3 (185 aa).

The protein belongs to the IF-3 family. As to quaternary structure, monomer.

The protein resides in the cytoplasm. Functionally, IF-3 binds to the 30S ribosomal subunit and shifts the equilibrium between 70S ribosomes and their 50S and 30S subunits in favor of the free subunits, thus enhancing the availability of 30S subunits on which protein synthesis initiation begins. In Streptococcus pneumoniae (strain Hungary19A-6), this protein is Translation initiation factor IF-3.